Here is a 271-residue protein sequence, read N- to C-terminus: Orotidine 5'-phosphate decarboxylase (271 aa).

K95 functions as the Proton donor in the catalytic mechanism.

The protein belongs to the OMP decarboxylase family. Type 2 subfamily.

It catalyses the reaction orotidine 5'-phosphate + H(+) = UMP + CO2. It participates in pyrimidine metabolism; UMP biosynthesis via de novo pathway; UMP from orotate: step 2/2. The protein is Orotidine 5'-phosphate decarboxylase of Aromatoleum aromaticum (strain DSM 19018 / LMG 30748 / EbN1) (Azoarcus sp. (strain EbN1)).